A 186-amino-acid polypeptide reads, in one-letter code: LSM12 homolog B (186 aa).

Residues 1 to 74 enclose the Sm domain; it reads MSSLAPCFTV…CMDIEIVKEA (74 aa). The AD domain maps to 84–186; sequence EPIDLPMIRE…VVQNFCSKQF (103 aa).

This sequence belongs to the LSM12 family. In terms of assembly, interacts with Sbat; along with Sbat and Vlet, may form an accessory subcomplex involved in SMN complex function.

May have an accessory function in the survival motor neuron (SMN) complex. The polypeptide is LSM12 homolog B (Drosophila melanogaster (Fruit fly)).